Consider the following 368-residue polypeptide: Isopentenyl-diphosphate delta-isomerase (368 aa).

7–8 (RK) contacts substrate. Residues threonine 65, 66 to 68 (GMT), serine 96, and asparagine 125 each bind FMN. 96-98 (SQR) is a substrate binding site. Glutamine 160 is a substrate binding site. Glutamate 161 contacts Mg(2+). Residues lysine 193, serine 218, threonine 223, 275–277 (GIR), and 296–297 (AL) contribute to the FMN site.

This sequence belongs to the IPP isomerase type 2 family. In terms of assembly, homooctamer. Dimer of tetramers. The cofactor is FMN. It depends on NADPH as a cofactor. Mg(2+) serves as cofactor.

It localises to the cytoplasm. It carries out the reaction isopentenyl diphosphate = dimethylallyl diphosphate. Its function is as follows. Involved in the biosynthesis of isoprenoids. Catalyzes the 1,3-allylic rearrangement of the homoallylic substrate isopentenyl (IPP) to its allylic isomer, dimethylallyl diphosphate (DMAPP). This is Isopentenyl-diphosphate delta-isomerase from Saccharolobus solfataricus (strain ATCC 35092 / DSM 1617 / JCM 11322 / P2) (Sulfolobus solfataricus).